The chain runs to 1615 residues: Regulating synaptic membrane exocytosis protein 1 (1615 aa).

The segment at 1–26 is disordered; sequence MSSAVGPRGPRPPTVPPPMQELPDLS. Residues 9 to 20 are compositionally biased toward pro residues; that stretch reads GPRPPTVPPPMQ. Residues 22 to 205 enclose the RabBD domain; the sequence is LPDLSHLTEE…TKSGAWFFGS (184 aa). An FYVE-type zinc finger spans residues 133-193; it reads KDDAPTCGIC…VCNLCRKQQE (61 aa). Zn(2+) is bound by residues Cys-139, Cys-142, Cys-155, Cys-158, Cys-163, Cys-166, Cys-185, and Cys-188. The disordered stretch occupies residues 205–569; the sequence is SGPQQPSQDG…CEDVELESES (365 aa). The span at 206-222 shows a compositional bias: polar residues; sequence GPQQPSQDGTLSDTATG. Over residues 227-240 the composition is skewed to basic and acidic residues; that stretch reads VPREKKARLQERSR. Residues 241-256 are compositionally biased toward polar residues; that stretch reads SQTPLSTAAVSSQDTA. Basic and acidic residues predominate over residues 327-379; sequence ADERERKERRETRRLEKGRSQDYSDRPEKRDNGRVAEDQKQRKEEEYQTRYRS. Residues 399–410 are compositionally biased toward basic residues; the sequence is MHARVSRARHER. Positions 421 to 459 are enriched in low complexity; sequence EAAAAAPAEATAGKRAPATARVSPPESPRARAAAAQPPT. The span at 460 to 475 shows a compositional bias: pro residues; it reads EHGPPPPRPAPGPAEP. Residues 476–489 are compositionally biased toward basic and acidic residues; the sequence is PEPRVPEPLRKQGR. The span at 511-523 shows a compositional bias: polar residues; that stretch reads RNDSLSSDQSESV. Residue Ser-514 is modified to Phosphoserine. The segment covering 529-541 has biased composition (basic residues); that stretch reads KPHRPKRGGKRRQ. Over residues 559 to 569 the composition is skewed to acidic residues; it reads SCEDVELESES. Ser-592 carries the post-translational modification Phosphoserine. The 87-residue stretch at 619 to 705 folds into the PDZ domain; that stretch reads RTTMPKESGA…EPQVEIIVSR (87 aa). Residues 712–746 form a disordered region; that stretch reads RIPESSHPPLESSSSSFESQKMERPSISVISPTSP. Residues 714–730 are compositionally biased toward low complexity; sequence PESSHPPLESSSSSFES. Ser-742 and Ser-745 each carry phosphoserine. Residues 756–879 form the C2 1 domain; that stretch reads LPGQLSVKLW…ALLDDEPHWY (124 aa). Residues 884-1201 are disordered; it reads HDESSLPLPQ…RQLPQVPVRS (318 aa). Phosphoserine is present on Ser-895. The span at 949 to 958 shows a compositional bias: polar residues; sequence ATTLTVPEQQ. Ser-991 bears the Phosphoserine mark. A compositionally biased stretch (basic and acidic residues) spans 1006 to 1023; sequence RHHDASRSPADHRSRHVE. Ser-1045 is modified (phosphoserine). Residues 1078–1092 are compositionally biased toward basic and acidic residues; the sequence is SPERERHSRKSERCS. The segment covering 1173-1187 has biased composition (polar residues); it reads QGSPTQSPPADTSFG. A Phosphoserine modification is found at Ser-1175. Thr-1177 is modified (phosphothreonine). Residues Ser-1179, Ser-1231, Ser-1233, Ser-1234, Ser-1262, Ser-1263, and Ser-1265 each carry the phosphoserine modification. The tract at residues 1256–1313 is disordered; that stretch reads DNASAKSSDSDVSDVSAISRASSTSRLSSTSFMSEQSERPRGRISSFTPKMQGRRMGT. Residues 1268–1289 are compositionally biased toward low complexity; the sequence is SDVSAISRASSTSRLSSTSFMS. Ser-1339 is modified (phosphoserine). The disordered stretch occupies residues 1368-1397; the sequence is RSRSTSQLSQTESGHKKLKSTIQRSTETGM. Positions 1461-1579 constitute a C2 2 domain; the sequence is AMGDIQIGME…DLSSMVIGWY (119 aa). Ser-1600, Ser-1603, Ser-1606, and Ser-1615 each carry phosphoserine.

In terms of assembly, interacts with RAB3C, RAB10, RAB26 and RAB37. Binds SNAP25, SYT1 and CACNA1B. Interaction with SYT1 is enhanced by calcium ions. Interaction with SNAP25 is weaker in the presence of calcium ions. Binds RAB3A, RAB3B and RAB3D that have been activated by GTP-binding. Binds UNC13A. Interacts with TSPOAP1 and RIMBP2. Interacts with PPFIA3 and PPFIA4. Interacts with ERC1. In terms of processing, phosphorylated by BRSK1. Highly expressed in hippocampus, brain cortex, cerebellum and olfactory bulb. Detected at lower levels in midbrain, hindbrain and spinal cord. Detected retina and in spinal cord motor neurons.

The protein localises to the cell membrane. It localises to the synapse. It is found in the presynaptic cell membrane. Its function is as follows. Rab effector involved in exocytosis. May act as scaffold protein that regulates neurotransmitter release at the active zone. Essential for maintaining normal probability of neurotransmitter release and for regulating release during short-term synaptic plasticity. Plays a role in dendrite formation by melanocytes. The protein is Regulating synaptic membrane exocytosis protein 1 (Rims1) of Rattus norvegicus (Rat).